A 439-amino-acid chain; its full sequence is Exodeoxyribonuclease 7 large subunit (439 aa).

This sequence belongs to the XseA family. Heterooligomer composed of large and small subunits.

It localises to the cytoplasm. It carries out the reaction Exonucleolytic cleavage in either 5'- to 3'- or 3'- to 5'-direction to yield nucleoside 5'-phosphates.. Bidirectionally degrades single-stranded DNA into large acid-insoluble oligonucleotides, which are then degraded further into small acid-soluble oligonucleotides. The polypeptide is Exodeoxyribonuclease 7 large subunit (Haemophilus influenzae (strain ATCC 51907 / DSM 11121 / KW20 / Rd)).